Consider the following 241-residue polypeptide: 1-(5-phosphoribosyl)-5-[(5-phosphoribosylamino)methylideneamino] imidazole-4-carboxamide isomerase (241 aa).

Residue D8 is the Proton acceptor of the active site. The active-site Proton donor is the D129.

This sequence belongs to the HisA/HisF family.

It localises to the cytoplasm. The enzyme catalyses 1-(5-phospho-beta-D-ribosyl)-5-[(5-phospho-beta-D-ribosylamino)methylideneamino]imidazole-4-carboxamide = 5-[(5-phospho-1-deoxy-D-ribulos-1-ylimino)methylamino]-1-(5-phospho-beta-D-ribosyl)imidazole-4-carboxamide. Its pathway is amino-acid biosynthesis; L-histidine biosynthesis; L-histidine from 5-phospho-alpha-D-ribose 1-diphosphate: step 4/9. In Caulobacter sp. (strain K31), this protein is 1-(5-phosphoribosyl)-5-[(5-phosphoribosylamino)methylideneamino] imidazole-4-carboxamide isomerase.